The primary structure comprises 148 residues: SsrA-binding protein (148 aa).

The protein belongs to the SmpB family.

It is found in the cytoplasm. Functionally, required for rescue of stalled ribosomes mediated by trans-translation. Binds to transfer-messenger RNA (tmRNA), required for stable association of tmRNA with ribosomes. tmRNA and SmpB together mimic tRNA shape, replacing the anticodon stem-loop with SmpB. tmRNA is encoded by the ssrA gene; the 2 termini fold to resemble tRNA(Ala) and it encodes a 'tag peptide', a short internal open reading frame. During trans-translation Ala-aminoacylated tmRNA acts like a tRNA, entering the A-site of stalled ribosomes, displacing the stalled mRNA. The ribosome then switches to translate the ORF on the tmRNA; the nascent peptide is terminated with the 'tag peptide' encoded by the tmRNA and targeted for degradation. The ribosome is freed to recommence translation, which seems to be the essential function of trans-translation. The protein is SsrA-binding protein of Azoarcus sp. (strain BH72).